The primary structure comprises 1281 residues: Tubulin polyglutamylase TTLL5 (1281 aa).

One can recognise a TTL domain in the interval 62-407; it reads RYHLSYKIVR…VCQDPAQRAS (346 aa). ATP is bound by residues Lys180, 186 to 187, 208 to 211, and 221 to 223; these read RG, SRYI, and KFD. An a protein-binding site is contributed by Arg186. Arg247 is an L-glutamate binding site. 268–269 is a binding site for ATP; it reads TN. Positions 270, 271, and 293 each coordinate L-glutamate. Positions 353, 366, and 368 each coordinate Mg(2+). Positions 378-488 are c-MTBD region; the sequence is PLDLKIKASM…RGGFIRIFPT (111 aa). Lys384 contributes to the L-glutamate binding site. 3 disordered regions span residues 577–614, 1072–1114, and 1199–1281; these read MNVK…LREN, SASA…LQTG, and SSAT…HTKI. A compositionally biased stretch (acidic residues) spans 584–604; sequence ESEEEEEVALDNEDEEQEASQ. Composition is skewed to polar residues over residues 1086–1113, 1199–1212, 1240–1263, and 1270–1281; these read SGPT…SLQT, SSAT…TTLP, ATSQ…SSLN, and ITSSTDPAHTKI.

It belongs to the tubulin--tyrosine ligase family. Interacts with the transcriptional coactivators NCOA1/SRC-1 and NCOA2/TIF2. The cofactor is Mg(2+). Expressed in the retina, found in the rod and cone photoreceptors (at protein level). Widely expressed with highest levels in heart and skeletal muscle and low levels in other tissues.

It localises to the cell projection. Its subcellular location is the cilium. The protein resides in the cytoplasm. It is found in the cytoskeleton. The protein localises to the cilium basal body. It localises to the nucleus. It carries out the reaction L-glutamyl-[protein] + L-glutamate + ATP = gamma-L-glutamyl-L-glutamyl-[protein] + ADP + phosphate + H(+). The enzyme catalyses (L-glutamyl)(n)-gamma-L-glutamyl-L-glutamyl-[protein] + L-glutamate + ATP = (L-glutamyl)(n+1)-gamma-L-glutamyl-L-glutamyl-[protein] + ADP + phosphate + H(+). Polyglutamylase which modifies tubulin, generating polyglutamate side chains on the gamma-carboxyl group of specific glutamate residues within the C-terminal tail of tubulin. Preferentially mediates ATP-dependent initiation step of the polyglutamylation reaction over the elongation step. Preferentially modifies the alpha-tubulin tail over a beta-tail. Required for CCSAP localization to both polyglutamylated spindle and cilia microtubules. Increases the effects of transcriptional coactivator NCOA2/TIF2 in glucocorticoid receptor-mediated repression and induction and in androgen receptor-mediated induction. The sequence is that of Tubulin polyglutamylase TTLL5 from Homo sapiens (Human).